Consider the following 590-residue polypeptide: Cytosolic Fe-S cluster assembly factor nar1 (590 aa).

Cysteine 20 is a binding site for [4Fe-4S] cluster. A disordered region spans residues 25–50; the sequence is ESLPQKQSNENPYEVTTEDKVQPENP. Cysteine 60, cysteine 63, cysteine 66, cysteine 204, and cysteine 259 together coordinate [4Fe-4S] cluster. The disordered stretch occupies residues 423 to 446; that stretch reads PGAKVATGQTAGGRRQPISRNGAS. [4Fe-4S] cluster-binding residues include cysteine 461 and cysteine 465.

The protein belongs to the NARF family.

In terms of biological role, component of the cytosolic Fe/S protein assembly machinery. Required for maturation of extramitochondrial Fe/S proteins. May play a role in the transfer of pre-assembled Fe/S clusters to target apoproteins. This Emericella nidulans (strain FGSC A4 / ATCC 38163 / CBS 112.46 / NRRL 194 / M139) (Aspergillus nidulans) protein is Cytosolic Fe-S cluster assembly factor nar1 (nar1).